A 219-amino-acid chain; its full sequence is Trafficking protein particle complex subunit 4 (219 aa).

It belongs to the TRAPP small subunits family. TRAPPC4 subfamily. Component of the multisubunit TRAPP (transport protein particle) complex, which includes at least TRAPPC2, TRAPPC2L, TRAPPC3, TRAPPC3L, TRAPPC4, TRAPPC5, TRAPPC8, TRAPPC9, TRAPPC10, TRAPPC11 and TRAPPC12. Interacts with SDC2. As to expression, widely expressed.

The protein resides in the postsynaptic cell membrane. It localises to the golgi apparatus membrane. The protein localises to the endoplasmic reticulum. It is found in the vesicle. Core component of the TRAPP complexes which has a function of guanine nucleotide exchange factor activity for Rab1 GTPase. Plays a role in vesicular transport from endoplasmic reticulum to Golgi and autophagy. May play a role in dendrite postsynaptic membrane trafficking. This is Trafficking protein particle complex subunit 4 from Mus musculus (Mouse).